A 389-amino-acid polypeptide reads, in one-letter code: Succinate--CoA ligase [ADP-forming] subunit beta (389 aa).

Residues Lys9–Glu244 enclose the ATP-grasp domain. Residues Lys46, Gly53–Gly55, Glu99, Ala102, and Glu107 contribute to the ATP site. Residues Asn199 and Asp213 each coordinate Mg(2+). Substrate contacts are provided by residues Asn264 and Gly321–Met323.

It belongs to the succinate/malate CoA ligase beta subunit family. As to quaternary structure, heterotetramer of two alpha and two beta subunits. Mg(2+) is required as a cofactor.

It carries out the reaction succinate + ATP + CoA = succinyl-CoA + ADP + phosphate. The catalysed reaction is GTP + succinate + CoA = succinyl-CoA + GDP + phosphate. It participates in carbohydrate metabolism; tricarboxylic acid cycle; succinate from succinyl-CoA (ligase route): step 1/1. In terms of biological role, succinyl-CoA synthetase functions in the citric acid cycle (TCA), coupling the hydrolysis of succinyl-CoA to the synthesis of either ATP or GTP and thus represents the only step of substrate-level phosphorylation in the TCA. The beta subunit provides nucleotide specificity of the enzyme and binds the substrate succinate, while the binding sites for coenzyme A and phosphate are found in the alpha subunit. The protein is Succinate--CoA ligase [ADP-forming] subunit beta of Paraburkholderia xenovorans (strain LB400).